The chain runs to 205 residues: Large ribosomal subunit protein uL3 (205 aa).

Positions 126-150 (GGPKTHGQSDRHRAPGSIGSTTTPG) are disordered.

This sequence belongs to the universal ribosomal protein uL3 family. In terms of assembly, part of the 50S ribosomal subunit. Forms a cluster with proteins L14 and L19.

Its function is as follows. One of the primary rRNA binding proteins, it binds directly near the 3'-end of the 23S rRNA, where it nucleates assembly of the 50S subunit. This chain is Large ribosomal subunit protein uL3, found in Dehalococcoides mccartyi (strain ATCC BAA-2100 / JCM 16839 / KCTC 5957 / BAV1).